Here is a 639-residue protein sequence, read N- to C-terminus: CTTNBP2 N-terminal-like protein (639 aa).

Residues 87–285 (MKQCKNMQER…DLEASHQHSS (199 aa)) are a coiled coil. Phosphoserine is present on residues S284 and S285. 3 disordered regions span residues 387 to 430 (VENG…PCSS), 463 to 490 (RHKFQSQADQDQQASGLQSPPSRDLSPT), and 511 to 609 (RFTS…AASL). Composition is skewed to low complexity over residues 405 to 430 (PLSSSGSSLSPSSTASSSLTSSPCSS) and 467 to 477 (QSQADQDQQAS). Residues S481, S488, S523, S527, S560, S563, and S568 each carry the phosphoserine modification. The segment covering 511–529 (RFTSQQGPIKPVSPNSSPF) has biased composition (polar residues). A phosphothreonine mark is found at T570 and T590. Positions 587–600 (PGLTPSPSATTPLT) are enriched in low complexity. S592 carries the post-translational modification Phosphoserine.

In terms of assembly, interacts with CTTN/cortactin; this interaction may redistribute CTTN to stress fibers. May form homomers. Associates with the core of STRIPAK complexes composed of PP2A catalytic and scaffolding subunits, the striatins (PP2A regulatory subunits), the striatin-associated proteins MOB4, STRIP1 and STRIP2, PDCD10 and members of the STE20 kinases, such as STK24 and STK26.

Its subcellular location is the cell projection. It is found in the lamellipodium. The protein localises to the cytoplasm. The protein resides in the cytoskeleton. It localises to the stress fiber. Regulates lamellipodial actin dynamics in a CTTN-dependent manner. Associates with core striatin-interacting phosphatase and kinase (STRIPAK) complex to form CTTNBP2NL-STRIPAK complexes. STRIPAK complexes have critical roles in protein (de)phosphorylation and are regulators of multiple signaling pathways including Hippo, MAPK, nuclear receptor and cytoskeleton remodeling. Different types of STRIPAK complexes are involved in a variety of biological processes such as cell growth, differentiation, apoptosis, metabolism and immune regulation. This chain is CTTNBP2 N-terminal-like protein, found in Homo sapiens (Human).